A 289-amino-acid polypeptide reads, in one-letter code: Trimeric intracellular cation channel type B (289 aa).

Residues 1–18 lie on the Lumenal side of the membrane; it reads MDVFAFFNLNELAFGLSK. Residues 19–36 form a helical membrane-spanning segment; sequence LPMFPYFDMAHYIISVMS. Topologically, residues 37–49 are cytoplasmic; the sequence is LREQPGALCVSQR. Residues 50 to 73 form a helical membrane-spanning segment; that stretch reads SPLACWFSSMLYCFGGAVLSALML. Residues 74–85 lie on the Lumenal side of the membrane; it reads ADAPVAPLSNTT. Residues 86-103 traverse the membrane as a helical segment; the sequence is NLLLATLMWYLVFYCPLD. Residues 104–107 lie on the Cytoplasmic side of the membrane; the sequence is VVYS. Residues 108–125 traverse the membrane as a helical segment; sequence LASLLPLRLVLTAMKEVT. Lys-122 and Arg-126 together coordinate a 1,2-diacyl-sn-glycero-3-phospho-(1D-myo-inositol-4,5-bisphosphate). The Lumenal portion of the chain corresponds to 126-144; sequence RTWKVLSGVSQAGSKYSDA. A helical transmembrane segment spans residues 145–162; it reads LFVMVAVGWAKGAGGGLI. The Cytoplasmic portion of the chain corresponds to 163–183; it reads SNFEQLVRGVWKPETNELLKM. The chain crosses the membrane as a helical span at residues 184–201; sequence SYPTKVTLLGAVVFSLQQ. Residues 202-210 are Lumenal-facing; it reads CRYLPIQTH. Residues 211-230 form a helical membrane-spanning segment; the sequence is HLTFIYTLFTVTNKTRMMLL. The Cytoplasmic portion of the chain corresponds to 231–289; the sequence is GSSSHPLSSLESFLYKTLFVRPLTDLSAEHTHSKHNGSVPEPTTAQTHTKEAEASKKTN. Residues 260–289 form a disordered region; that stretch reads HTHSKHNGSVPEPTTAQTHTKEAEASKKTN. The segment covering 278 to 289 has biased composition (basic and acidic residues); the sequence is HTKEAEASKKTN.

This sequence belongs to the TMEM38 family. In terms of assembly, homotrimer; conformation seems to be controled by binding to diacylglycerol (DAG).

It localises to the endoplasmic reticulum membrane. The catalysed reaction is K(+)(in) = K(+)(out). Channel activity is activated by increased cytosolic Ca(2+) levels and blocked by luminal high Ca(2+) levels. Its function is as follows. Intracellular monovalent cation channel required for maintenance of rapid intracellular calcium release. Acts as a potassium counter-ion channel that functions in synchronization with calcium release from intracellular stores. Activated by increased cytosolic Ca(2+) levels. The protein is Trimeric intracellular cation channel type B (tmem38b) of Danio rerio (Zebrafish).